Reading from the N-terminus, the 53-residue chain is Ovomucoid (53 aa).

Positions 3-53 (VDCSEYPQPTCTTEHRPVCGSNNETYGNKCNFCNAVVKSNGTLTVSHFGKC) constitute a Kazal-like domain. Cystine bridges form between cysteine 5–cysteine 35, cysteine 13–cysteine 32, and cysteine 21–cysteine 53. The N-linked (GlcNAc...) asparagine glycan is linked to asparagine 42.

The protein resides in the secreted. This chain is Ovomucoid, found in Polyplectron bicalcaratum (Grey peacock-pheasant).